A 385-amino-acid polypeptide reads, in one-letter code: MKDSFLFTSESVTEGHPDKMADQISDAVLDYIIERDQKAKVACETLVANGFCMITGELKTSVYAPMQEIAREVVKKIGYTDALYGFDYRSAAVLNGVGEQSPDINQGVDREDGEIGAGDQGLMFGYACKETETLMPLPIHLAHQLTFALAQKRKDNTLPFLRPDGKSQVSVRYENNKPVSIDTIVISTQHSPEVSQKHLKESVIEEIVYKVLPKEYLHDNIKFFVNPTGKFVIGGPQGDAGLTGRKIIVDTYGGSCPHGGGAFSGKDPSKVDRSAAYAARYVAKNLVASGVCDKATVQLAYAIGVIEPVSVYVNTHNTSKYSSAELEKCVKSVFKLTPKGIIESLDLLRPIYSLTSAYGHFGRELEEFTWEKTNKAEEIQAFFKR.

H16 provides a ligand contact to ATP. Mg(2+) is bound at residue D18. A K(+)-binding site is contributed by E44. Residues E57 and Q100 each coordinate L-methionine. The segment at 100-110 (QSPDINQGVDR) is flexible loop. Residues 164–166 (DGK), 230–231 (KF), D239, 245–246 (RK), A262, and K266 each bind ATP. D239 lines the L-methionine pocket. Residue K270 participates in L-methionine binding.

The protein belongs to the AdoMet synthase family. In terms of assembly, homotetramer; dimer of dimers. It depends on Mg(2+) as a cofactor. K(+) serves as cofactor.

It is found in the cytoplasm. It catalyses the reaction L-methionine + ATP + H2O = S-adenosyl-L-methionine + phosphate + diphosphate. It participates in amino-acid biosynthesis; S-adenosyl-L-methionine biosynthesis; S-adenosyl-L-methionine from L-methionine: step 1/1. Functionally, catalyzes the formation of S-adenosylmethionine (AdoMet) from methionine and ATP. The overall synthetic reaction is composed of two sequential steps, AdoMet formation and the subsequent tripolyphosphate hydrolysis which occurs prior to release of AdoMet from the enzyme. The chain is S-adenosylmethionine synthase from Helicobacter pylori (strain Shi470).